The chain runs to 317 residues: Putative carboxypeptidase RP402 (317 aa).

Catalysis depends on serine 125, which acts as the Nucleophile. Catalysis depends on charge relay system residues glutamate 225 and histidine 288.

The protein belongs to the peptidase S66 family.

This chain is Putative carboxypeptidase RP402, found in Rickettsia prowazekii (strain Madrid E).